The chain runs to 262 residues: uncharacterized protein (262 aa).

This is an uncharacterized protein from Mycobacterium tuberculosis (strain CDC 1551 / Oshkosh).